Here is a 793-residue protein sequence, read N- to C-terminus: DnaJ homolog subfamily C member 10 (793 aa).

The N-terminal stretch at 1-32 (MGVWLNRDEFIRDVKRISLCLLVLYVVIVVGT) is a signal peptide. Residues 35 to 100 (NFYSLLGVSK…DLRKKYDKYG (66 aa)) form the J domain. The 103-residue stretch at 130–232 (EIITLERREF…ESLVSFAMQH (103 aa)) folds into the Thioredoxin 1 domain. Cys-158 and Cys-161 are joined by a disulfide. 2 trxb regions span residues 235 to 350 (TTVT…LPDF) and 348 to 463 (PDFE…PQNF). Thioredoxin domains follow at residues 454–553 (HVTT…IEDL), 557–665 (SVVS…SWGL), and 671–776 (ASID…ALIY). Cysteines 480 and 483 form a disulfide. The N-linked (GlcNAc...) asparagine glycan is linked to Asn-530. 2 disulfides stabilise this stretch: Cys-588-Cys-591 and Cys-700-Cys-703. The Prevents secretion from ER signature appears at 790–793 (KDEL).

Interacts with HSPA5 (via its J domain). Interacts with EDEM1.

The protein localises to the endoplasmic reticulum lumen. Endoplasmic reticulum disulfide reductase involved both in the correct folding of proteins and degradation of misfolded proteins. Required for efficient folding of proteins in the endoplasmic reticulum by catalyzing the removal of non-native disulfide bonds formed during the folding of proteins, such as LDLR. Also involved in endoplasmic reticulum-associated degradation (ERAD) by reducing incorrect disulfide bonds in misfolded glycoproteins recognized by EDEM1. Interaction with HSPA5 is required its activity, not for the disulfide reductase activity, but to facilitate the release of DNAJC10 from its substrate. Promotes apoptotic signaling pathway in response to endoplasmic reticulum stress. The protein is DnaJ homolog subfamily C member 10 (Dnajc10) of Rattus norvegicus (Rat).